A 319-amino-acid chain; its full sequence is Cobalamin biosynthesis protein CbiB (319 aa).

The next 5 helical transmembrane spans lie at 52 to 74, 79 to 101, 155 to 177, 207 to 229, and 296 to 318; these read IGGG…GVLA, IHPW…GRSL, GIIA…YKAV, YLPA…LSGW, and LMWV…LSGV.

This sequence belongs to the CobD/CbiB family.

The protein localises to the cell membrane. It participates in cofactor biosynthesis; adenosylcobalamin biosynthesis; adenosylcobalamin from cob(II)yrinate a,c-diamide: step 4/7. Its function is as follows. Converts cobyric acid to cobinamide by the addition of aminopropanol on the F carboxylic group. However, the true cosubstrate could be (R)-1-amino-2-propanol O-2-phosphate, leading to cobinamide phosphate. This Salmonella typhi protein is Cobalamin biosynthesis protein CbiB.